The chain runs to 199 residues: NADH-quinone oxidoreductase subunit C (199 aa).

This sequence belongs to the complex I 30 kDa subunit family. As to quaternary structure, NDH-1 is composed of 14 different subunits. Subunits NuoB, C, D, E, F, and G constitute the peripheral sector of the complex.

The protein localises to the cell inner membrane. It catalyses the reaction a quinone + NADH + 5 H(+)(in) = a quinol + NAD(+) + 4 H(+)(out). NDH-1 shuttles electrons from NADH, via FMN and iron-sulfur (Fe-S) centers, to quinones in the respiratory chain. The immediate electron acceptor for the enzyme in this species is believed to be ubiquinone. Couples the redox reaction to proton translocation (for every two electrons transferred, four hydrogen ions are translocated across the cytoplasmic membrane), and thus conserves the redox energy in a proton gradient. The polypeptide is NADH-quinone oxidoreductase subunit C (Leptothrix cholodnii (strain ATCC 51168 / LMG 8142 / SP-6) (Leptothrix discophora (strain SP-6))).